The chain runs to 426 residues: 3-phosphoshikimate 1-carboxyvinyltransferase (426 aa).

3 residues coordinate 3-phosphoshikimate: Lys-22, Ser-23, and Arg-27. Lys-22 is a binding site for phosphoenolpyruvate. Residues Gly-96 and Arg-124 each coordinate phosphoenolpyruvate. Ser-170, Ser-171, Gln-172, Ser-198, Asp-314, Asn-337, and Lys-341 together coordinate 3-phosphoshikimate. Gln-172 serves as a coordination point for phosphoenolpyruvate. Asp-314 (proton acceptor) is an active-site residue. The phosphoenolpyruvate site is built by Arg-345, Arg-387, and Lys-412.

Belongs to the EPSP synthase family. Monomer.

The protein localises to the cytoplasm. It catalyses the reaction 3-phosphoshikimate + phosphoenolpyruvate = 5-O-(1-carboxyvinyl)-3-phosphoshikimate + phosphate. Its pathway is metabolic intermediate biosynthesis; chorismate biosynthesis; chorismate from D-erythrose 4-phosphate and phosphoenolpyruvate: step 6/7. In terms of biological role, catalyzes the transfer of the enolpyruvyl moiety of phosphoenolpyruvate (PEP) to the 5-hydroxyl of shikimate-3-phosphate (S3P) to produce enolpyruvyl shikimate-3-phosphate and inorganic phosphate. This Shewanella sp. (strain MR-7) protein is 3-phosphoshikimate 1-carboxyvinyltransferase.